Here is a 217-residue protein sequence, read N- to C-terminus: Probable transaldolase (217 aa).

Lys-83 functions as the Schiff-base intermediate with substrate in the catalytic mechanism.

Belongs to the transaldolase family. Type 3B subfamily.

Its subcellular location is the cytoplasm. It carries out the reaction D-sedoheptulose 7-phosphate + D-glyceraldehyde 3-phosphate = D-erythrose 4-phosphate + beta-D-fructose 6-phosphate. It participates in carbohydrate degradation; pentose phosphate pathway; D-glyceraldehyde 3-phosphate and beta-D-fructose 6-phosphate from D-ribose 5-phosphate and D-xylulose 5-phosphate (non-oxidative stage): step 2/3. Its function is as follows. Transaldolase is important for the balance of metabolites in the pentose-phosphate pathway. The polypeptide is Probable transaldolase (Bartonella tribocorum (strain CIP 105476 / IBS 506)).